A 466-amino-acid polypeptide reads, in one-letter code: Asparagine--tRNA ligase (466 aa).

Belongs to the class-II aminoacyl-tRNA synthetase family. As to quaternary structure, homodimer.

It localises to the cytoplasm. The catalysed reaction is tRNA(Asn) + L-asparagine + ATP = L-asparaginyl-tRNA(Asn) + AMP + diphosphate + H(+). This is Asparagine--tRNA ligase from Shewanella baltica (strain OS155 / ATCC BAA-1091).